The sequence spans 147 residues: Large ribosomal subunit protein bL9 (147 aa).

Belongs to the bacterial ribosomal protein bL9 family.

Binds to the 23S rRNA. This Campylobacter jejuni subsp. jejuni serotype O:6 (strain 81116 / NCTC 11828) protein is Large ribosomal subunit protein bL9.